The primary structure comprises 440 residues: Xaa-Pro dipeptidase (440 aa).

5 residues coordinate Mn(2+): D244, D255, H335, E380, and E419.

The protein belongs to the peptidase M24B family. Bacterial-type prolidase subfamily. Mn(2+) is required as a cofactor.

The catalysed reaction is Xaa-L-Pro dipeptide + H2O = an L-alpha-amino acid + L-proline. Its function is as follows. Splits dipeptides with a prolyl residue in the C-terminal position. In Shewanella piezotolerans (strain WP3 / JCM 13877), this protein is Xaa-Pro dipeptidase.